The chain runs to 1106 residues: Carbamoyl phosphate synthase large chain (1106 aa).

Positions 1–402 (MPRREDIRSV…SFQKALRSLE (402 aa)) are carboxyphosphate synthetic domain. The ATP site is built by R129, R169, G175, G176, E208, V210, E215, G241, V242, H243, Q285, and E299. The ATP-grasp 1 domain maps to 133 to 328 (KKAMEKIGVR…IAKIAALLSI (196 aa)). The Mg(2+) site is built by Q285, E299, and N301. Q285, E299, and N301 together coordinate Mn(2+). The segment at 403–582 (IDRYGFGSDG…YSSYDEEDES (180 aa)) is oligomerization domain. Positions 583–964 (DVTNAKSVMI…AFLKSQYMAG (382 aa)) are carbamoyl phosphate synthetic domain. Positions 707-898 (VEVLEKLKLN…IVKYATRIMM (192 aa)) constitute an ATP-grasp 2 domain. Residues R743, S782, L784, E789, G814, I815, H816, S817, Q857, and E869 each contribute to the ATP site. Residues Q857, E869, and N871 each coordinate Mg(2+). Mn(2+)-binding residues include Q857, E869, and N871. Residues 965–1106 (DELPSQGTVF…QEIHAMPKIL (142 aa)) form the MGS-like domain. The segment at 965–1106 (DELPSQGTVF…QEIHAMPKIL (142 aa)) is allosteric domain.

It belongs to the CarB family. Composed of two chains; the small (or glutamine) chain promotes the hydrolysis of glutamine to ammonia, which is used by the large (or ammonia) chain to synthesize carbamoyl phosphate. Tetramer of heterodimers (alpha,beta)4. Mg(2+) serves as cofactor. Mn(2+) is required as a cofactor.

It carries out the reaction hydrogencarbonate + L-glutamine + 2 ATP + H2O = carbamoyl phosphate + L-glutamate + 2 ADP + phosphate + 2 H(+). The enzyme catalyses hydrogencarbonate + NH4(+) + 2 ATP = carbamoyl phosphate + 2 ADP + phosphate + 2 H(+). It functions in the pathway amino-acid biosynthesis; L-arginine biosynthesis; carbamoyl phosphate from bicarbonate: step 1/1. The protein operates within pyrimidine metabolism; UMP biosynthesis via de novo pathway; (S)-dihydroorotate from bicarbonate: step 1/3. Large subunit of the glutamine-dependent carbamoyl phosphate synthetase (CPSase). CPSase catalyzes the formation of carbamoyl phosphate from the ammonia moiety of glutamine, carbonate, and phosphate donated by ATP, constituting the first step of 2 biosynthetic pathways, one leading to arginine and/or urea and the other to pyrimidine nucleotides. The large subunit (synthetase) binds the substrates ammonia (free or transferred from glutamine from the small subunit), hydrogencarbonate and ATP and carries out an ATP-coupled ligase reaction, activating hydrogencarbonate by forming carboxy phosphate which reacts with ammonia to form carbamoyl phosphate. The chain is Carbamoyl phosphate synthase large chain from Leptospira interrogans serogroup Icterohaemorrhagiae serovar copenhageni (strain Fiocruz L1-130).